A 431-amino-acid polypeptide reads, in one-letter code: Adenylosuccinate synthetase (431 aa).

Residues 13–19 and 41–43 contribute to the GTP site; these read GDEGKGK and GHT. The Proton acceptor role is filled by aspartate 14. Mg(2+) is bound by residues aspartate 14 and glycine 41. IMP contacts are provided by residues 14–17, 39–42, threonine 130, arginine 144, glutamine 225, threonine 240, and arginine 304; these read DEGK and NAGH. Histidine 42 (proton donor) is an active-site residue. A substrate-binding site is contributed by 300–306; that stretch reads AVTGRPR. Residues arginine 306, 332–334, and 415–417 contribute to the GTP site; these read KLD and STG.

It belongs to the adenylosuccinate synthetase family. As to quaternary structure, homodimer. The cofactor is Mg(2+).

Its subcellular location is the cytoplasm. The enzyme catalyses IMP + L-aspartate + GTP = N(6)-(1,2-dicarboxyethyl)-AMP + GDP + phosphate + 2 H(+). The protein operates within purine metabolism; AMP biosynthesis via de novo pathway; AMP from IMP: step 1/2. Its function is as follows. Plays an important role in the de novo pathway of purine nucleotide biosynthesis. Catalyzes the first committed step in the biosynthesis of AMP from IMP. This chain is Adenylosuccinate synthetase, found in Legionella pneumophila (strain Lens).